The sequence spans 334 residues: AA9 family lytic polysaccharide monooxygenase A (334 aa).

The N-terminal stretch at Met-1–Ala-22 is a signal peptide. Cu(2+) is bound by residues His-23 and His-108. Disulfide bonds link Cys-78/Cys-200 and Cys-119/Cys-123. Asn-160 is a glycosylation site (N-linked (GlcNAc...) asparagine). O2-binding residues include His-186 and Gln-195. Tyr-197 contacts Cu(2+). Asn-208 is a glycosylation site (N-linked (GlcNAc...) asparagine). The segment at Gly-244 to Pro-304 is disordered. Over residues Thr-249 to Pro-265 the composition is skewed to low complexity.

This sequence belongs to the polysaccharide monooxygenase AA9 family. It depends on Cu(2+) as a cofactor.

It is found in the secreted. It carries out the reaction [(1-&gt;4)-beta-D-glucosyl]n+m + reduced acceptor + O2 = 4-dehydro-beta-D-glucosyl-[(1-&gt;4)-beta-D-glucosyl]n-1 + [(1-&gt;4)-beta-D-glucosyl]m + acceptor + H2O.. Lytic polysaccharide monooxygenase (LPMO) that depolymerizes crystalline and amorphous polysaccharides via the oxidation of scissile alpha- or beta-(1-4)-glycosidic bonds, yielding C1 or C4 oxidation products. Catalysis by LPMOs requires the reduction of the active-site copper from Cu(II) to Cu(I) by a reducing agent and H(2)O(2) or O(2) as a cosubstrate. Active on hemicelluloses, including xylan, glucomannan, and xyloglucan. Shows clear activity on cellooligosaccharides, generating C4 oxidation products. Also displays activity on konjac glucomannan (KGM), a linear beta-1,4-linked mannan with randomly distributed glucosyl residues; as well as trace activity on lichenan, a linear beta-1,3-beta-1,4-glucan with a 1:2 ratio of beta-1,3 to beta-1,4 linkages. Has no activity on ivory nut mannan (INM), a linear beta-1,4-linked mannan without substitutions. The polypeptide is AA9 family lytic polysaccharide monooxygenase A (Malbranchea cinnamomea (Thermophilic fungus)).